Here is a 979-residue protein sequence, read N- to C-terminus: Receptor-type tyrosine-protein phosphatase-like N (979 aa).

An N-terminal signal peptide occupies residues Met-1–Ala-37. The RESP18 homology domain stretch occupies residues Ile-38–Pro-134. Topologically, residues Ile-38 to Arg-575 are lumenal. Cys-56 and Cys-65 form a disulfide bridge. Residues Met-113–Ser-130 show a composition bias toward basic and acidic residues. Disordered regions lie at residues Met-113–Leu-173, Gly-289–Pro-330, and Met-392–Val-443. Over residues Thr-145–Ala-155 the composition is skewed to polar residues. Residues Arg-303–Lys-322 show a composition bias toward basic and acidic residues. 2 positions are modified to phosphoserine: Ser-307 and Ser-308. Over residues Ser-414–Leu-424 the composition is skewed to polar residues. The interval Ser-449 to Arg-575 is sufficient for dimerization of proICA512. N-linked (GlcNAc...) asparagine glycans are attached at residues Asn-506 and Asn-524. Residues Ser-576–Met-600 form a helical membrane-spanning segment. The sufficient for dimerization of proICA512 stretch occupies residues Arg-601 to Glu-732. Residues Arg-601 to Gln-979 are Cytoplasmic-facing. The tract at residues Arg-644–Glu-680 is disordered. Low complexity predominate over residues Gln-648–Ser-677. In terms of domain architecture, Tyrosine-protein phosphatase spans Leu-709–Glu-969. Residue Lys-754 forms a Glycyl lysine isopeptide (Lys-Gly) (interchain with G-Cter in SUMO) linkage.

This sequence belongs to the protein-tyrosine phosphatase family. Receptor class 8 subfamily. In terms of assembly, homodimer; shown for the unprocessed protein (proICA512) in the endoplasmic reticulum and resolved during protein maturation as ICA512-TMF seems to be predominantly monomeric in secretory granules; however, ICA512-CCF interacts with ICA512-TMF disrupting the ICA512-TMF:SNTB2 complex. The isolated lumenal RESP18 homology domain has been shown to form disulfide-linked homooligomers. Interacts (via cytoplasmic domain) with phosphorylated SNTB2; this protects PTPRN against cleavage by CAPN1 to produce ICA512-CCF. Dephosphorylation of SNTB2 upon insulin stimulation disrupts the interaction and results in PTPRN cleavage. Interacts with SNX19. ICA512-CCF interacts with PIAS4; in the nucleus. Interacts with STAT5B (phosphorylated); down-regulated by ICA512-CCF sumoylation; ICA512-CCF prevents STAT5B dephosphorylation; ICA512-CCF mediates interaction of STAT5B with PIAS4. Interacts (via RESP18 homology domain) with insulin and proinsulin. Interacts with PTPRN2, PTPRA and PTPRE. In terms of processing, subject to proteolytic cleavage at multiple sites. Subject to cleavage on a pair of basic residues. On exocytosis of secretory granules in pancreatic beta-cells ICA512-TMF is transiently inserted in the plasma-membrane and cleaved by mu-type calpain CPN1 to yield ICA512-CCF. Post-translationally, O-glycosylated. N-glycosylated. In terms of processing, sumoylated at two sites including Lys-754. Sumoylation decreases interaction with STAT5. Detected in pituitary. Detected in brain (at protein level). Detected in brain. Weakly expressed in the colon, intestine, stomach and pancreas.

It localises to the membrane. The protein resides in the cytoplasmic vesicle. It is found in the secretory vesicle membrane. The protein localises to the perikaryon. Its subcellular location is the cell projection. It localises to the axon. The protein resides in the synapse. It is found in the cell membrane. The protein localises to the endosome. Its subcellular location is the nucleus. In terms of biological role, plays a role in vesicle-mediated secretory processes. Required for normal accumulation of secretory vesicles in hippocampus, pituitary and pancreatic islets. Required for the accumulation of normal levels of insulin-containing vesicles and preventing their degradation. Plays a role in insulin secretion in response to glucose stimuli. Required for normal accumulation of the neurotransmitters norepinephrine, dopamine and serotonin in the brain. In females, but not in males, required for normal accumulation and secretion of pituitary hormones, such as luteinizing hormone (LH) and follicle-stimulating hormone (FSH). Seems to lack intrinsic enzyme activity. Required to maintain normal levels of renin expression and renin release. May regulate catalytic active protein-tyrosine phosphatases such as PTPRA through dimerization. Functionally, ICA512-TMF regulates dynamics and exocytosis of insulin secretory granules (SGs); binding of ICA512-TMF to SNTB2/beta-2-syntrophin is proposed to restrain SGs mobility and exocytosis by tethering them to the actin cytoskeleton depending on UTRN; the function is inhibited by cytoplasmic ICA512-CFF dimerizing with ICA512-TMF and displacing SNTB2. Its function is as follows. ICA512-CCF translocated to the nucleus promotes expression of insulin and other granule-related genes; the function implicates binding to and regulating activity of STAT5B probably by preventing its dephosphorylation and potentially by inducing its sumoylation by recruiting PIAS4. Enhances pancreatic beta-cell proliferation by converging with signaling by STAT5B and STAT3. ICA512-CCF located in the cytoplasm regulates dynamics and exocytosis of insulin secretory granules (SGs) by dimerizing with ICA512-TMF and displacing SNTB2 thus enhancing SGs mobility and exocytosis. The protein is Receptor-type tyrosine-protein phosphatase-like N (Ptprn) of Mus musculus (Mouse).